A 48-amino-acid chain; its full sequence is Gas vesicle protein A (48 aa).

Belongs to the gas vesicle GvpA family. As to quaternary structure, the gas vesicle shell is 2 nm thick and consists of a single layer of this protein. It forms helical ribs nearly perpendicular to the long axis of the vesicle.

The protein resides in the gas vesicle shell. Functionally, gas vesicles are hollow, gas filled proteinaceous nanostructures found in some microorganisms. During planktonic growth they allow positioning of the organism at a favorable depth for light or nutrient acquisition. GvpA forms the protein shell. The polypeptide is Gas vesicle protein A (Spirulina sp. (strain CCAP 1475/10)).